A 214-amino-acid polypeptide reads, in one-letter code: Ubiquitin-conjugating enzyme E2 21 (214 aa).

Positions 21 to 168 (ARVTRKCKEV…AVYWTSYFAN (148 aa)) constitute a UBC core domain. Residue Cys106 is the Glycyl thioester intermediate of the active site. The 43-residue stretch at 172 to 214 (DVEPDFNRKVGRLIEMGIRETEAIVYLSCNNWKLEQALQFIFD) folds into the UBA domain.

It belongs to the ubiquitin-conjugating enzyme family.

It catalyses the reaction S-ubiquitinyl-[E1 ubiquitin-activating enzyme]-L-cysteine + [E2 ubiquitin-conjugating enzyme]-L-cysteine = [E1 ubiquitin-activating enzyme]-L-cysteine + S-ubiquitinyl-[E2 ubiquitin-conjugating enzyme]-L-cysteine.. Its pathway is protein modification; protein ubiquitination. Its function is as follows. Acts with E3 ubiquitin-protein ligase trim-21 to catalyze the 'Lys-48'-linked polyubiquitination of ced-1, promoting its proteasomal degradation to maintain appropriate ced-1 levels for apoptotic cell clearance. This is Ubiquitin-conjugating enzyme E2 21 (ubc-21) from Caenorhabditis elegans.